The primary structure comprises 1024 residues: MAQGAMRFCSEGDCAISPPRCPRRWLPEGPVPQSPPASMYGSTGSLIRRVVGPGPRGRDLGRVTAPCTPLRAPPSPHIAPSPWGPSSPTGQPPPGAQSSVVIFRFVEKASVRPLNGLPASGGLSRSWDLGGISAPRPTPALGPGCNRKLRLEASTSDPLPAGGGSVLPGSRDPSRGPLVPPQIGADGLYSSLPNGLGGTPEHLAMHFRGPADTGFLNQGDTWSSPREVSSHAQRIARAKWEFFYGSLDAPSSGAKPPEQVLPSRGVGSKQGSGVAVGRAAKYSETDLDKVPLRCYRETDIDEVLAEREEADSAIESQPSSEGPHGTAQPPASRPSPCPGPSSSLGSGNEDDEAGGEEDVDDEVFEASEGARPGDHMPHSGLLKSPVPFLLGTSPSADGPDSFSCVFEAILESHRAKGTSYSSLASLEALASPGPTQSPFFTFEMPPQPPAPRPDPPAPAPLAPLEPDSGTSSAADGPWTQRREVEESDAGATLAPRKELPSPSHSEDSFGLGAAPLGSEPPLSQLVSDSDSELDSTERLALGSTDTLSNGQKADLEAAQRLAKRLYRLDGFRKADVARHLGKNNDFSKLVAGEYLKFFVFTGMTLDQALRVFLKELALMGETQERERVLAHFSQRYFQCNPEALSSEDGAHTLTCALMLLNTDLHGHNIGKRMTCGDFIGNLEGLNDGGDFPRELLKALYSSIKNEKLQWAIDEEELRRSLSELADPNPKVIKRVSGGSGSSSSPFLDLTPEPGAAVYKHGALVRKVHADPDCRKTPRGKRGWKSFHGILKGMILYLQKEEYQPGKALSEAELKNAISIHHALATRASDYSKRPHVFYLRTADWRVFLFQAPSLEQMQSWITRINVVAAMFSAPPFPAAVSSQKKFSRPLLPSAATRLSQEEQVRTHEAKLKAMASELREHRAAHLGKKARGKEADEQRQKEAYLEFEKSRYGTYAALLRVKMKAASEELDTIEAALAQAGSTEDGCPPPHSSPSLRPKPTSQPRAQRPGSETRAGAGSTRPKP.

The interval 67–96 (CTPLRAPPSPHIAPSPWGPSSPTGQPPPGA) is disordered. Pro residues predominate over residues 71 to 95 (RAPPSPHIAPSPWGPSSPTGQPPPG). Residues serine 126 and serine 156 each carry the phosphoserine modification. 4 disordered regions span residues 154–195 (STSD…LPNG), 250–277 (PSSG…VAVG), 307–401 (REEA…GPDS), and 434–536 (PTQS…LDST). A compositionally biased stretch (acidic residues) spans 348–365 (NEDDEAGGEEDVDDEVFE). A compositionally biased stretch (pro residues) spans 445–463 (PPQPPAPRPDPPAPAPLAP). A compositionally biased stretch (basic and acidic residues) spans 495–507 (PRKELPSPSHSED). In terms of domain architecture, SEC7 spans 512–706 (GAAPLGSEPP…KALYSSIKNE (195 aa)). Serine 720 is subject to Phosphoserine. The PH domain maps to 756-869 (AVYKHGALVR…WITRINVVAA (114 aa)). Coiled coils occupy residues 898-924 (LSQE…HRAA) and 956-983 (AALL…AGST). The interval 976-1024 (ALAQAGSTEDGCPPPHSSPSLRPKPTSQPRAQRPGSETRAGAGSTRPKP) is disordered.

Belongs to the PSD family. Interacts with ACTN1. Interacts (ARF6-bound form) with KCNK1; does not interact with KCNK1 in the absence of ARF6. In terms of tissue distribution, highest expression detected in brain and some expression detected also in uterus, stomach, ovary and intestine, with isoform 2 being expressed at the highest levels. In the brain, isoform 1 is highly expressed in the strata oriens, radiatum, lacunosum-moleculare of the hippocampal CA1-3 regions and the dentate molecular layer of the hippocampal formation, with lower levels detected in the neuronal cell layers and the stratum lucidum (at protein level). Not detected in tongue, thymus, spleen, lung, heart, liver and kidney.

It localises to the cell membrane. It is found in the cell projection. The protein localises to the ruffle. The protein resides in the ruffle membrane. Its subcellular location is the cleavage furrow. Its function is as follows. Guanine nucleotide exchange factor for ARF6. Isoform 2 and isoform 3 induce cytoskeletal remodeling, but lead to distinct morphological changes in HeLa cells: isoform 2 induces cell elongation and formation of actin-rich protrusions, whereas isoform 3 promotes the formation of membrane ruffles and loss of stress fibers. In Mus musculus (Mouse), this protein is PH and SEC7 domain-containing protein 1 (Psd).